A 345-amino-acid chain; its full sequence is Protein RecA (345 aa).

G65–T72 is a binding site for ATP.

The protein belongs to the RecA family.

The protein localises to the cytoplasm. Its function is as follows. Can catalyze the hydrolysis of ATP in the presence of single-stranded DNA, the ATP-dependent uptake of single-stranded DNA by duplex DNA, and the ATP-dependent hybridization of homologous single-stranded DNAs. It interacts with LexA causing its activation and leading to its autocatalytic cleavage. The polypeptide is Protein RecA (Colwellia psychrerythraea (strain 34H / ATCC BAA-681) (Vibrio psychroerythus)).